Consider the following 363-residue polypeptide: tRNA(Met) cytidine acetate ligase (363 aa).

Residues 7–20 (IAEF…HKYL), glycine 96, asparagine 152, and arginine 175 each bind ATP.

Belongs to the TmcAL family.

The protein localises to the cytoplasm. It carries out the reaction cytidine(34) in elongator tRNA(Met) + acetate + ATP = N(4)-acetylcytidine(34) in elongator tRNA(Met) + AMP + diphosphate. Functionally, catalyzes the formation of N(4)-acetylcytidine (ac(4)C) at the wobble position of elongator tRNA(Met), using acetate and ATP as substrates. First activates an acetate ion to form acetyladenylate (Ac-AMP) and then transfers the acetyl group to tRNA to form ac(4)C34. This chain is tRNA(Met) cytidine acetate ligase, found in Streptococcus thermophilus (strain ATCC BAA-250 / LMG 18311).